We begin with the raw amino-acid sequence, 295 residues long: Acetylglutamate kinase (295 aa).

Residues 66–67, R88, and N193 contribute to the substrate site; that span reads GG.

The protein belongs to the acetylglutamate kinase family. ArgB subfamily.

The protein resides in the cytoplasm. It carries out the reaction N-acetyl-L-glutamate + ATP = N-acetyl-L-glutamyl 5-phosphate + ADP. It functions in the pathway amino-acid biosynthesis; L-arginine biosynthesis; N(2)-acetyl-L-ornithine from L-glutamate: step 2/4. Functionally, catalyzes the ATP-dependent phosphorylation of N-acetyl-L-glutamate. This Bradyrhizobium diazoefficiens (strain JCM 10833 / BCRC 13528 / IAM 13628 / NBRC 14792 / USDA 110) protein is Acetylglutamate kinase.